The chain runs to 304 residues: Probable casein kinase I homolog ECU03_0910 (304 aa).

Positions 8–304 (IKLVQKIASG…SDSMGDLEIL (297 aa)) constitute a Protein kinase domain. Residues 14–22 (IASGAFGDI) and K37 contribute to the ATP site. Residue D129 is the Proton acceptor of the active site.

Belongs to the protein kinase superfamily. CK1 Ser/Thr protein kinase family. Casein kinase I subfamily.

Its subcellular location is the nucleus. It carries out the reaction L-seryl-[protein] + ATP = O-phospho-L-seryl-[protein] + ADP + H(+). The enzyme catalyses L-threonyl-[protein] + ATP = O-phospho-L-threonyl-[protein] + ADP + H(+). Its function is as follows. Involved in DNA repair. May regulate the activity of protein(s) involved in double strand break repair caused by gamma rays. In Encephalitozoon cuniculi (strain GB-M1) (Microsporidian parasite), this protein is Probable casein kinase I homolog ECU03_0910.